Consider the following 394-residue polypeptide: Phosphoglycerate kinase (394 aa).

Residues 21–23 (DFN), arginine 36, 59–62 (HLGR), arginine 118, and arginine 151 each bind substrate. Serine 183 bears the Phosphoserine mark. ATP-binding residues include lysine 201 and glycine 292. At threonine 299 the chain carries Phosphothreonine. ATP is bound by residues glutamate 323 and 350-353 (GGDS).

This sequence belongs to the phosphoglycerate kinase family. As to quaternary structure, monomer.

Its subcellular location is the cytoplasm. It carries out the reaction (2R)-3-phosphoglycerate + ATP = (2R)-3-phospho-glyceroyl phosphate + ADP. Its pathway is carbohydrate degradation; glycolysis; pyruvate from D-glyceraldehyde 3-phosphate: step 2/5. The polypeptide is Phosphoglycerate kinase (Bacillus cereus (strain ZK / E33L)).